The following is a 314-amino-acid chain: Olfactory receptor 8U9 (314 aa).

Topologically, residues 1-25 (MAQINCTQVTEFILVGLTDREELKM) are extracellular. N-linked (GlcNAc...) asparagine glycosylation is present at N5. A helical membrane pass occupies residues 26–46 (PLFVVFLSIYLFTTLGNLGLI). Over 47 to 54 (LVIRTDAR) the chain is Cytoplasmic. Residues 55–75 (LHTPMYFFLSNLAFVDFCYSS) traverse the membrane as a helical segment. At 76-99 (VITPKMLGNFLYKQNMISFNACAA) the chain is on the extracellular side. C97 and C189 form a disulfide bridge. Residues 100–120 (QLGCFLAFMTAECLLLASMAY) traverse the membrane as a helical segment. At 121–133 (DRYVAICNPLLYM) the chain is on the cytoplasmic side. A helical membrane pass occupies residues 134–154 (VLMSPGICFQLVAAPYSYSFL). At 155–196 (VALFHAILTFRLCYCHSNAINHFYCDDMPLLRLTCSDTHSKQ) the chain is on the extracellular side. Residues 197–217 (LWIFVCAGIMFISSLLIVFIS) form a helical membrane-spanning segment. Over 218 to 237 (YTFIISAILRMRSAEGRRKA) the chain is Cytoplasmic. Residues 238–258 (FSTCGSHMLAVTIFYGTLIFM) traverse the membrane as a helical segment. The Extracellular portion of the chain corresponds to 259–271 (YLQPSSNHSLDTD). N265 carries an N-linked (GlcNAc...) asparagine glycan. Residues 272–292 (KMASVFYTVIIPMLNPLIYSL) traverse the membrane as a helical segment. Over 293 to 314 (RNKEVKDALKKLIASKNQMLSS) the chain is Cytoplasmic.

The protein belongs to the G-protein coupled receptor 1 family.

It localises to the cell membrane. Potential odorant receptor. This is Olfactory receptor 8U9 from Mus musculus (Mouse).